A 186-amino-acid chain; its full sequence is Tumor necrosis factor, alpha-induced protein 8-like protein 2 A (186 aa).

This sequence belongs to the TNFAIP8 family. TNFAIP8L2 subfamily.

In terms of biological role, acts as a negative regulator of innate and adaptive immunity by maintaining immune homeostasis. Negative regulator of Toll-like receptor and T-cell receptor function. Prevents hyperresponsiveness of the immune system and maintains immune homeostasis. Inhibits jun/ap1 and NF-kappa-B activation. Promotes Fas-induced apoptosis. The chain is Tumor necrosis factor, alpha-induced protein 8-like protein 2 A (tnfaip8l2a) from Danio rerio (Zebrafish).